The following is a 415-amino-acid chain: Serine hydroxymethyltransferase (415 aa).

Residues Leu117 and 121 to 123 (GHL) contribute to the (6S)-5,6,7,8-tetrahydrofolate site. Lys226 is subject to N6-(pyridoxal phosphate)lysine.

It belongs to the SHMT family. As to quaternary structure, homodimer. The cofactor is pyridoxal 5'-phosphate.

It localises to the cytoplasm. The catalysed reaction is (6R)-5,10-methylene-5,6,7,8-tetrahydrofolate + glycine + H2O = (6S)-5,6,7,8-tetrahydrofolate + L-serine. The protein operates within one-carbon metabolism; tetrahydrofolate interconversion. It functions in the pathway amino-acid biosynthesis; glycine biosynthesis; glycine from L-serine: step 1/1. Its function is as follows. Catalyzes the reversible interconversion of serine and glycine with tetrahydrofolate (THF) serving as the one-carbon carrier. This reaction serves as the major source of one-carbon groups required for the biosynthesis of purines, thymidylate, methionine, and other important biomolecules. Also exhibits THF-independent aldolase activity toward beta-hydroxyamino acids, producing glycine and aldehydes, via a retro-aldol mechanism. This Leptospira borgpetersenii serovar Hardjo-bovis (strain JB197) protein is Serine hydroxymethyltransferase.